The following is a 73-amino-acid chain: RNA-binding protein Hfq (73 aa).

The region spanning 8–68 (DQFLNQIRKE…ISTFAPQKNV (61 aa)) is the Sm domain.

This sequence belongs to the Hfq family. In terms of assembly, homohexamer.

Functionally, RNA chaperone that binds small regulatory RNA (sRNAs) and mRNAs to facilitate mRNA translational regulation in response to envelope stress, environmental stress and changes in metabolite concentrations. Also binds with high specificity to tRNAs. This Bacillus subtilis (strain 168) protein is RNA-binding protein Hfq.